The chain runs to 254 residues: Imidazole glycerol phosphate synthase subunit HisF (254 aa).

Active-site residues include Asp-13 and Asp-132.

Belongs to the HisA/HisF family. Heterodimer of HisH and HisF.

It is found in the cytoplasm. The enzyme catalyses 5-[(5-phospho-1-deoxy-D-ribulos-1-ylimino)methylamino]-1-(5-phospho-beta-D-ribosyl)imidazole-4-carboxamide + L-glutamine = D-erythro-1-(imidazol-4-yl)glycerol 3-phosphate + 5-amino-1-(5-phospho-beta-D-ribosyl)imidazole-4-carboxamide + L-glutamate + H(+). It functions in the pathway amino-acid biosynthesis; L-histidine biosynthesis; L-histidine from 5-phospho-alpha-D-ribose 1-diphosphate: step 5/9. IGPS catalyzes the conversion of PRFAR and glutamine to IGP, AICAR and glutamate. The HisF subunit catalyzes the cyclization activity that produces IGP and AICAR from PRFAR using the ammonia provided by the HisH subunit. The chain is Imidazole glycerol phosphate synthase subunit HisF from Nautilia profundicola (strain ATCC BAA-1463 / DSM 18972 / AmH).